Consider the following 73-residue polypeptide: MNFLLSKLLLGLIRFYQYCISPLIPPRCRYTPTCSQYAVEAVKKYGAFKGGRLAIKRIARCHPLGGHGHDPVP.

This sequence belongs to the UPF0161 family.

It is found in the cell inner membrane. In terms of biological role, could be involved in insertion of integral membrane proteins into the membrane. In Neisseria meningitidis serogroup C / serotype 2a (strain ATCC 700532 / DSM 15464 / FAM18), this protein is Putative membrane protein insertion efficiency factor.